A 582-amino-acid polypeptide reads, in one-letter code: Zinc finger protein 614 (582 aa).

A KRAB domain is found at 8 to 79 (LTLEDVAVEF…VAKIQNKNCP (72 aa)). The C2H2-type 1 zinc finger occupies 202–224 (HACIECEQTFLRKSQLIYHENIH). Residues 254 to 278 (KICIPNEYRKGSTVNSRLIAHQQTH) form a C2H2-type 2; degenerate zinc finger. C2H2-type zinc fingers lie at residues 284-306 (YMCS…QRTH), 312-334 (YVCN…QRTH), 340-362 (YICS…QRTH), 368-390 (YICS…QRSH), 396-418 (YICS…QRTH), 424-446 (YICN…QRTH), 452-474 (YECN…ERCH), 480-502 (FVCT…QRIH), 508-530 (YECN…QRTH), and 536-558 (YGCS…KKMH).

The protein belongs to the krueppel C2H2-type zinc-finger protein family.

It localises to the nucleus. Its function is as follows. May be involved in transcriptional regulation. The sequence is that of Zinc finger protein 614 (ZNF614) from Macaca fascicularis (Crab-eating macaque).